A 137-amino-acid chain; its full sequence is Basic phospholipase A2 homolog APL-K49 (137 aa).

An N-terminal signal peptide occupies residues 1 to 16 (MRTLWIVALLLVGVEG). 7 disulfides stabilise this stretch: cysteine 42–cysteine 131, cysteine 44–cysteine 60, cysteine 59–cysteine 111, cysteine 65–cysteine 137, cysteine 66–cysteine 104, cysteine 73–cysteine 97, and cysteine 91–cysteine 102. An important for membrane-damaging activities in eukaryotes and bacteria; heparin-binding region spans residues 121 to 133 (KKYKAYFKLKCKK).

Belongs to the phospholipase A2 family. Group II subfamily. K49 sub-subfamily. Monomer. As to expression, expressed by the venom gland.

The protein localises to the secreted. Functionally, snake venom phospholipase A2 (PLA2) that lacks enzymatic activity. Does not show antibacterial activity. Is myotoxic and displays edema-inducing activities. A model of myotoxic mechanism has been proposed: an apo Lys49-PLA2 is activated by the entrance of a hydrophobic molecule (e.g. fatty acid) at the hydrophobic channel of the protein leading to a reorientation of a monomer. This reorientation causes a transition between 'inactive' to 'active' states, causing alignment of C-terminal and membrane-docking sites (MDoS) side-by-side and putting the membrane-disruption sites (MDiS) in the same plane, exposed to solvent and in a symmetric position for both monomers. The MDoS region stabilizes the toxin on membrane by the interaction of charged residues with phospholipid head groups. Subsequently, the MDiS region destabilizes the membrane with penetration of hydrophobic residues. This insertion causes a disorganization of the membrane, allowing an uncontrolled influx of ions (i.e. calcium and sodium), and eventually triggering irreversible intracellular alterations and cell death. The protein is Basic phospholipase A2 homolog APL-K49 of Agkistrodon piscivorus leucostoma (Western cottonmouth).